A 295-amino-acid chain; its full sequence is Probable intramembrane protease C25B8.17 (295 aa).

Residues 1-21 (MEGVILASSALFTVYIGAKWS) traverse the membrane as a helical segment. The Cytoplasmic portion of the chain corresponds to 22-35 (AQEEEPEEKQLINK). A helical transmembrane segment spans residues 36-56 (RLAVLFPIFGGVTLVLMYLAL). At 57–63 (RYLSKEY) the chain is on the lumenal side. A helical transmembrane segment spans residues 64–84 (IQLILQGYASLASIICFVRSF). Residues 85 to 89 (NPKTT) lie on the Cytoplasmic side of the membrane. The helical transmembrane segment at 90–106 (FGKITATMSSIAIALFY) threads the bilayer. The Lumenal portion of the chain corresponds to 107-111 (FKTKH). Residues 112–130 (WMASNILAWALAANSISIM) form a helical membrane-spanning segment. At 131–139 (RIDSYNTGA) the chain is on the cytoplasmic side. The helical transmembrane segment at 140–160 (LLLGALFFYDIYFVFGTEVMV) threads the bilayer. The active site involves Asp-149. The Lumenal portion of the chain corresponds to 161 to 183 (TVATGIDIPAKYVLPQFKNPTRL). Residues 184–204 (SMLGLGDIVMPGLMLALMYRF) form a helical membrane-spanning segment. Residue Asp-190 is part of the active site. The Cytoplasmic segment spans residues 205-221 (DLHYYINSTSQPKKHST). The helical transmembrane segment at 222–244 (YFRNTFIAYGLGLGVTNFALYYF) threads the bilayer. Residues 245–249 (KAAQP) are Lumenal-facing. The short motif at 249–251 (PAL) is the PAL element. The helical transmembrane segment at 250–268 (ALLYLSPACIVAPLLTAWY) threads the bilayer. Topologically, residues 269 to 295 (RDELKTLFSFRSETEDETDEQDKCKST) are cytoplasmic.

Belongs to the peptidase A22B family.

It localises to the endoplasmic reticulum membrane. It is found in the golgi apparatus membrane. The protein is Probable intramembrane protease C25B8.17 of Schizosaccharomyces pombe (strain 972 / ATCC 24843) (Fission yeast).